The primary structure comprises 558 residues: Small ribosomal subunit protein bS1 (558 aa).

S1 motif domains follow at residues 21 to 87 (GSII…LSRE), 105 to 171 (SETV…VSRR), 192 to 260 (GMHV…LGLK), 277 to 347 (ETKL…LGLK), 364 to 434 (GVHV…LGIK), and 451 to 520 (GAII…LTIH).

It belongs to the bacterial ribosomal protein bS1 family.

Binds mRNA; thus facilitating recognition of the initiation point. It is needed to translate mRNA with a short Shine-Dalgarno (SD) purine-rich sequence. The polypeptide is Small ribosomal subunit protein bS1 (rpsA) (Buchnera aphidicola subsp. Acyrthosiphon pisum (strain APS) (Acyrthosiphon pisum symbiotic bacterium)).